Reading from the N-terminus, the 324-residue chain is NADH-quinone oxidoreductase subunit H 2 (324 aa).

A run of 9 helical transmembrane segments spans residues 1 to 21 (MIGM…LLVV), 77 to 97 (ILAP…VAFG), 109 to 129 (VMFL…GALA), 147 to 167 (LGYE…AGSL), 179 to 199 (VWFV…GVAA), 214 to 234 (LVAG…FLGE), 238 to 258 (VLLV…GPVW), 263 to 283 (LPGP…FIWI), and 298 to 318 (FAWK…GLIV).

It belongs to the complex I subunit 1 family. NDH-1 is composed of 14 different subunits. Subunits NuoA, H, J, K, L, M, N constitute the membrane sector of the complex.

It is found in the cell inner membrane. The enzyme catalyses a quinone + NADH + 5 H(+)(in) = a quinol + NAD(+) + 4 H(+)(out). NDH-1 shuttles electrons from NADH, via FMN and iron-sulfur (Fe-S) centers, to quinones in the respiratory chain. The immediate electron acceptor for the enzyme in this species is believed to be ubiquinone. Couples the redox reaction to proton translocation (for every two electrons transferred, four hydrogen ions are translocated across the cytoplasmic membrane), and thus conserves the redox energy in a proton gradient. This subunit may bind ubiquinone. This Rhodopseudomonas palustris (strain BisB18) protein is NADH-quinone oxidoreductase subunit H 2.